A 355-amino-acid chain; its full sequence is Cobalt-precorrin-5B C(1)-methyltransferase (355 aa).

It belongs to the CbiD family.

It carries out the reaction Co-precorrin-5B + S-adenosyl-L-methionine = Co-precorrin-6A + S-adenosyl-L-homocysteine. Its pathway is cofactor biosynthesis; adenosylcobalamin biosynthesis; cob(II)yrinate a,c-diamide from sirohydrochlorin (anaerobic route): step 6/10. In terms of biological role, catalyzes the methylation of C-1 in cobalt-precorrin-5B to form cobalt-precorrin-6A. This is Cobalt-precorrin-5B C(1)-methyltransferase from Parasynechococcus marenigrum (strain WH8102).